Reading from the N-terminus, the 119-residue chain is Protein phosphatase EYA4 (119 aa).

Belongs to the HAD-like hydrolase superfamily. EYA family. Mg(2+) serves as cofactor.

The protein localises to the cytoplasm. The protein resides in the nucleus. It catalyses the reaction O-phospho-L-tyrosyl-[protein] + H2O = L-tyrosyl-[protein] + phosphate. Its function is as follows. Tyrosine phosphatase that specifically dephosphorylates 'Tyr-142' of histone H2AX (H2AXY142ph). 'Tyr-142' phosphorylation of histone H2AX plays a central role in DNA repair and acts as a mark that distinguishes between apoptotic and repair responses to genotoxic stress. Promotes efficient DNA repair by dephosphorylating H2AX, promoting the recruitment of DNA repair complexes containing MDC1. Its function as histone phosphatase probably explains its role in transcription regulation during organogenesis. May be involved in development of the eye. This Gallus gallus (Chicken) protein is Protein phosphatase EYA4 (EYA4).